The chain runs to 74 residues: Exodeoxyribonuclease 7 small subunit (74 aa).

Belongs to the XseB family. In terms of assembly, heterooligomer composed of large and small subunits.

The protein resides in the cytoplasm. It catalyses the reaction Exonucleolytic cleavage in either 5'- to 3'- or 3'- to 5'-direction to yield nucleoside 5'-phosphates.. In terms of biological role, bidirectionally degrades single-stranded DNA into large acid-insoluble oligonucleotides, which are then degraded further into small acid-soluble oligonucleotides. The protein is Exodeoxyribonuclease 7 small subunit of Haemophilus ducreyi (strain 35000HP / ATCC 700724).